A 729-amino-acid polypeptide reads, in one-letter code: MDKATIKAHKINEQEYEEILKILGREPNLLELGIFSAMWSEHCSYKSSKKYLNGFPTKAPWVIQGPGENAGVIDVGGGVAAVFKMESHNHPSFIEPFQGAATGVGGILRDVFTMGARVVANMNSLRFGEVCGDSENARKQRYLLKGAVAGIGHYGNCMGIPTVGGETTFDASFNGNILVNAFALGLVKSDEIFYGKAEGIGNPVIYVGSKTGRDGLGGAVMASDSFSDANKSLRPTVQVGDPFAEKLLMEACLELFKKDYIVGIQDMGAAGLTSSSFEMAGRSGSGMKMQLDRVPMREEGMSPYELMLSESQERMLICAKKGCEQKVLEIFKKWDLDAEVIGEVTDSGQMQLYWHGELVGQIPIKPLSEAAPVLDRPTARPKYLDEIKNLQIPKDIDNKTAFLKLLRESEILNKALIYDQYDANIQTNTIKQPGYLGAAVIRIKETGKALAMAAQCDPRANFVGPKIGAARAVAAAGRKVAMSGAMPLAITDCLNYGNPQNPEVMWQFAQGCEGIKEACRELNTPVVSGNVSLYNDTDGVSVYPTPAIVSVGVNDDARANLKSVFGSAGTAIYLLGETKGEFAASLYVKALFDVVGGTLSEIDYKKERALWELVIAANKAGVLEFANSVGVGGVAMSLAKMACISGIGAECKFDVAQANFIFDESFSRALVGVTSEAKFSELAAKFGVKFEKIGVTGGDKFRLNEIDENLKEISEIYFNEFANIIKQED.

The active site involves His-42. ATP contacts are provided by Tyr-45 and Lys-84. Mg(2+) is bound at residue Glu-86. Residues 87–90 (SHNH) and Arg-109 contribute to the substrate site. His-88 serves as the catalytic Proton acceptor. Asp-110 is a Mg(2+) binding site. Substrate is bound at residue Gln-238. Asp-266 provides a ligand contact to Mg(2+). 310-312 (ESQ) serves as a coordination point for substrate. ATP-binding residues include Asp-492 and Gly-529. Asn-530 contacts Mg(2+). Residue Ser-532 participates in substrate binding.

It belongs to the FGAMS family. As to quaternary structure, monomer. Part of the FGAM synthase complex composed of 1 PurL, 1 PurQ and 2 PurS subunits.

The protein resides in the cytoplasm. It carries out the reaction N(2)-formyl-N(1)-(5-phospho-beta-D-ribosyl)glycinamide + L-glutamine + ATP + H2O = 2-formamido-N(1)-(5-O-phospho-beta-D-ribosyl)acetamidine + L-glutamate + ADP + phosphate + H(+). It participates in purine metabolism; IMP biosynthesis via de novo pathway; 5-amino-1-(5-phospho-D-ribosyl)imidazole from N(2)-formyl-N(1)-(5-phospho-D-ribosyl)glycinamide: step 1/2. Its function is as follows. Part of the phosphoribosylformylglycinamidine synthase complex involved in the purines biosynthetic pathway. Catalyzes the ATP-dependent conversion of formylglycinamide ribonucleotide (FGAR) and glutamine to yield formylglycinamidine ribonucleotide (FGAM) and glutamate. The FGAM synthase complex is composed of three subunits. PurQ produces an ammonia molecule by converting glutamine to glutamate. PurL transfers the ammonia molecule to FGAR to form FGAM in an ATP-dependent manner. PurS interacts with PurQ and PurL and is thought to assist in the transfer of the ammonia molecule from PurQ to PurL. This chain is Phosphoribosylformylglycinamidine synthase subunit PurL, found in Campylobacter curvus (strain 525.92).